A 469-amino-acid polypeptide reads, in one-letter code: Deoxyribodipyrimidine photo-lyase (469 aa).

The region spanning 1-133 (MRLVWFRRDL…IWSAFDDKCV (133 aa)) is the Photolyase/cryptochrome alpha/beta domain. Glu-107 is a binding site for (6R)-5,10-methylene-5,6,7,8-tetrahydrofolate.

This sequence belongs to the DNA photolyase class-1 family. Monomer. Requires FAD as cofactor. (6R)-5,10-methylene-5,6,7,8-tetrahydrofolate serves as cofactor.

The enzyme catalyses cyclobutadipyrimidine (in DNA) = 2 pyrimidine residues (in DNA).. In terms of biological role, involved in repair of UV radiation-induced DNA damage. Catalyzes the light-dependent monomerization (300-600 nm) of cyclobutyl pyrimidine dimers (in cis-syn configuration), which are formed between adjacent bases on the same DNA strand upon exposure to ultraviolet radiation. In Vibrio cholerae serotype O1 (strain ATCC 39315 / El Tor Inaba N16961), this protein is Deoxyribodipyrimidine photo-lyase (phrA).